We begin with the raw amino-acid sequence, 389 residues long: MNIEYPYSIHIIDKNKVPIYDQGNLFHTEKSSRLSHVSRGLLDHLFTFSSDNTERVRKLHILADYLYLLESERESYKNEWISLKDQVSLLQKQNSELRARIATNKEIIEGLREPVKKPIYTTQDKERLRVFFCEERSMEYIYYHIKRLAQQSYYSHLNNLQKDCEPFRGVYMSFLTNVKFLVLCEAGYWTVPDIETNTTESILSLSQKKGEDLLQKGVVIFNELEGGYQLSPRFIGDLYAHGFIKQINFTTKVPEGLPPIIAEKLQDYKFPGSNTVLIEREIPRWNFNEMKRETQMRTNLYIFKNYRCFYGYSPLRPYEPITPEEFGFDYYSWENMVDEDEGEVVYISKYTKIIKVTKEHAWAWPEHDGDTMSCTTSIEDEWIHRMDNA.

This is Protein P4 from Rice tungro bacilliform virus (isolate Philippines) (RTBV).